Reading from the N-terminus, the 361-residue chain is Microtubule-associated protein Jupiter (361 aa).

The segment covering 1-15 (MISNYDITDSKSSSK) has biased composition (polar residues). 2 disordered regions span residues 1-38 (MISNYDITDSKSSSKVLRPPGGGSSDIFGSDMPQTPRN) and 70-99 (IGDNPRRGQKPVDSHSRLFGEPMRPITPGK). Phosphoserine is present on Ser-24. Phosphothreonine is present on Thr-35. A compositionally biased stretch (basic and acidic residues) spans 73-87 (NPRRGQKPVDSHSRL). Position 96 is a phosphothreonine (Thr-96). Position 105 is a phosphoserine (Ser-105). Composition is skewed to low complexity over residues 125-134 (GSSTANTTNG) and 141-154 (SGSVSSASSSVSSS). Disordered regions lie at residues 125–165 (GSST…SGSR) and 328–361 (GSTNSGSVGNGDNGGNSVVNKNRVPPGGYSSGLW). Phosphoserine is present on residues Ser-143 and Ser-154. A compositionally biased stretch (polar residues) spans 155-165 (TENLKMNSGSR).

This sequence belongs to the MAP Jupiter family.

It localises to the nucleus. It is found in the cytoplasm. Its subcellular location is the cytoskeleton. The protein localises to the spindle. In terms of biological role, binds to all microtubule populations. The polypeptide is Microtubule-associated protein Jupiter (Drosophila persimilis (Fruit fly)).